Consider the following 447-residue polypeptide: ATP-dependent protease ATPase subunit HslU (447 aa).

ATP contacts are provided by residues Ile18, 60 to 65 (GVGKTE), Asp259, Glu325, and Arg397.

This sequence belongs to the ClpX chaperone family. HslU subfamily. A double ring-shaped homohexamer of HslV is capped on each side by a ring-shaped HslU homohexamer. The assembly of the HslU/HslV complex is dependent on binding of ATP.

The protein localises to the cytoplasm. Its function is as follows. ATPase subunit of a proteasome-like degradation complex; this subunit has chaperone activity. The binding of ATP and its subsequent hydrolysis by HslU are essential for unfolding of protein substrates subsequently hydrolyzed by HslV. HslU recognizes the N-terminal part of its protein substrates and unfolds these before they are guided to HslV for hydrolysis. This chain is ATP-dependent protease ATPase subunit HslU, found in Burkholderia pseudomallei (strain 668).